A 229-amino-acid chain; its full sequence is Large ribosomal subunit protein uL1 (229 aa).

It belongs to the universal ribosomal protein uL1 family. Part of the 50S ribosomal subunit.

Functionally, binds directly to 23S rRNA. The L1 stalk is quite mobile in the ribosome, and is involved in E site tRNA release. In terms of biological role, protein L1 is also a translational repressor protein, it controls the translation of the L11 operon by binding to its mRNA. The chain is Large ribosomal subunit protein uL1 from Chlorobium chlorochromatii (strain CaD3).